A 591-amino-acid polypeptide reads, in one-letter code: A-type ATP synthase subunit A (591 aa).

233–240 (GPFGSGKT) contacts ATP.

This sequence belongs to the ATPase alpha/beta chains family. Has multiple subunits with at least A(3), B(3), C, D, E, F, H, I and proteolipid K(x).

The protein localises to the cell membrane. It catalyses the reaction ATP + H2O + 4 H(+)(in) = ADP + phosphate + 5 H(+)(out). Functionally, component of the A-type ATP synthase that produces ATP from ADP in the presence of a proton gradient across the membrane. The A chain is the catalytic subunit. In Metallosphaera sedula (strain ATCC 51363 / DSM 5348 / JCM 9185 / NBRC 15509 / TH2), this protein is A-type ATP synthase subunit A.